Reading from the N-terminus, the 335-residue chain is DNA-directed RNA polymerase subunit alpha (335 aa).

An alpha N-terminal domain (alpha-NTD) region spans residues 1–233 (MQRNWRELIK…DQLTIFINFE (233 aa)). Residues 249–335 (FNDHLFRSVD…DIENRRKEQE (87 aa)) form an alpha C-terminal domain (alpha-CTD) region.

This sequence belongs to the RNA polymerase alpha chain family. In terms of assembly, homodimer. The RNAP catalytic core consists of 2 alpha, 1 beta, 1 beta' and 1 omega subunit. When a sigma factor is associated with the core the holoenzyme is formed, which can initiate transcription.

The enzyme catalyses RNA(n) + a ribonucleoside 5'-triphosphate = RNA(n+1) + diphosphate. DNA-dependent RNA polymerase catalyzes the transcription of DNA into RNA using the four ribonucleoside triphosphates as substrates. This Syntrophobacter fumaroxidans (strain DSM 10017 / MPOB) protein is DNA-directed RNA polymerase subunit alpha.